A 407-amino-acid chain; its full sequence is Phosphopentomutase (407 aa).

Mn(2+) contacts are provided by Asp10, Asp306, His311, Asp347, His348, and His359.

Belongs to the phosphopentomutase family. Requires Mn(2+) as cofactor.

The protein localises to the cytoplasm. It carries out the reaction 2-deoxy-alpha-D-ribose 1-phosphate = 2-deoxy-D-ribose 5-phosphate. The catalysed reaction is alpha-D-ribose 1-phosphate = D-ribose 5-phosphate. It functions in the pathway carbohydrate degradation; 2-deoxy-D-ribose 1-phosphate degradation; D-glyceraldehyde 3-phosphate and acetaldehyde from 2-deoxy-alpha-D-ribose 1-phosphate: step 1/2. Its function is as follows. Isomerase that catalyzes the conversion of deoxy-ribose 1-phosphate (dRib-1-P) and ribose 1-phosphate (Rib-1-P) to deoxy-ribose 5-phosphate (dRib-5-P) and ribose 5-phosphate (Rib-5-P), respectively. This Buchnera aphidicola subsp. Acyrthosiphon pisum (strain APS) (Acyrthosiphon pisum symbiotic bacterium) protein is Phosphopentomutase.